The sequence spans 319 residues: Acetyl-coenzyme A carboxylase carboxyl transferase subunit alpha (319 aa).

The CoA carboxyltransferase C-terminal domain maps to 34–295 (ELEEEVSKLK…KVRLKRDLAD (262 aa)).

The protein belongs to the AccA family. In terms of assembly, acetyl-CoA carboxylase is a heterohexamer composed of biotin carboxyl carrier protein (AccB), biotin carboxylase (AccC) and two subunits each of ACCase subunit alpha (AccA) and ACCase subunit beta (AccD).

Its subcellular location is the cytoplasm. It catalyses the reaction N(6)-carboxybiotinyl-L-lysyl-[protein] + acetyl-CoA = N(6)-biotinyl-L-lysyl-[protein] + malonyl-CoA. It participates in lipid metabolism; malonyl-CoA biosynthesis; malonyl-CoA from acetyl-CoA: step 1/1. Functionally, component of the acetyl coenzyme A carboxylase (ACC) complex. First, biotin carboxylase catalyzes the carboxylation of biotin on its carrier protein (BCCP) and then the CO(2) group is transferred by the carboxyltransferase to acetyl-CoA to form malonyl-CoA. The polypeptide is Acetyl-coenzyme A carboxylase carboxyl transferase subunit alpha (Pseudoalteromonas translucida (strain TAC 125)).